Consider the following 480-residue polypeptide: PTS system sucrose-specific EIIBC component (480 aa).

The region spanning 4–87 is the PTS EIIB type-1 domain; that stretch reads KKSAENILQA…EKITGKEASS (84 aa). Residue Cys26 is the Phosphocysteine intermediate; for EIIB activity of the active site. Transmembrane regions (helical) follow at residues 109 to 129, 158 to 178, 182 to 202, 264 to 284, 303 to 323, 349 to 369, 405 to 425, and 449 to 469; these read LSDI…LMGI, MINI…GFSA, FGGN…PELM, LLTP…FVGP, FGGA…VITG, PIAT…FFII, PFIG…FFKV, and LHYG…TYAL. Residues 120–480 enclose the PTS EIIC type-1 domain; the sequence is IVAGGLLMGI…YRKKYRNIEA (361 aa).

The protein localises to the cell membrane. It catalyses the reaction N(pros)-phospho-L-histidyl-[protein](out) + sucrose = sucrose 6(G)-phosphate(in) + L-histidyl-[protein]. Its function is as follows. The phosphoenolpyruvate-dependent sugar phosphotransferase system (sugar PTS), a major carbohydrate active transport system, catalyzes the phosphorylation of incoming sugar substrates concomitantly with their translocation across the cell membrane. This system is involved in sucrose transport. The chain is PTS system sucrose-specific EIIBC component from Staphylococcus xylosus.